A 400-amino-acid polypeptide reads, in one-letter code: Serine/threonine transporter SstT (400 aa).

Helical transmembrane passes span 14-34 (IIIAIILGIGVALLFPTVTPY), 48-68 (SVAPILVFVLVLSSIANFQVG), 76-96 (VLLLYVVGMLLAAFSAVIASL), 136-156 (AISEANFIGILAWAIGLGLAM), 177-197 (IIHKVIAFAPVGIFGLVAVTF), 211-231 (LLAVLLGTMLFVALVINPILV), 285-305 (IPLGATVNMAGAAVTITVLTL), 311-331 (LGIHVDLATMIILSVVATISA), and 349-371 (CSLFGISSEIAMQVVAVGMIISV).

Belongs to the dicarboxylate/amino acid:cation symporter (DAACS) (TC 2.A.23) family.

The protein localises to the cell inner membrane. It carries out the reaction L-serine(in) + Na(+)(in) = L-serine(out) + Na(+)(out). The enzyme catalyses L-threonine(in) + Na(+)(in) = L-threonine(out) + Na(+)(out). In terms of biological role, involved in the import of serine and threonine into the cell, with the concomitant import of sodium (symport system). The chain is Serine/threonine transporter SstT from Acinetobacter baumannii (strain ATCC 17978 / DSM 105126 / CIP 53.77 / LMG 1025 / NCDC KC755 / 5377).